The sequence spans 223 residues: Ras-related protein Rab-21 (223 aa).

Ala2 is subject to N-acetylalanine. GTP is bound by residues Gly26, Gly29, Lys30, Thr31, Ser32, Asn43, Asp44, His46, Thr48, and Thr49. Thr31 contacts Mg(2+). The short motif at 41–54 (KFNDKHITTLQASF) is the Switch 1 element. Positions 49 and 72 each coordinate Mg(2+). The Switch 2 motif lies at 74-92 (AGQERFHALGPIYYRDSNG). Residues Gly75, Asn130, Lys131, Asp133, Ala161, and Lys162 each contribute to the GTP site. Residues Cys219 and Cys220 are each lipidated (S-geranylgeranyl cysteine). Cysteine methyl ester is present on Cys220. The propeptide at 221-223 (SSG) is removed in mature form.

It belongs to the small GTPase superfamily. Rab family. Interacts with the cytoplasmic tail of integrins ITGA1, ITGA2, ITGA5, ITGA6, ITGA11 and ITGB1; this interaction is dependent upon its GDP/GTP cycle. Interacts with RABGEF1 (via VPS9 domain). Interacts with ANKRD27. Interacts (in GTP-bound form) with VAMP8 in response to starvation; the interaction probably regulates VAMP8 endolysosomal trafficking. Interacts (active GTP-bound form) with TMED10; the interaction is indirect and regulates TMED10 abundance and localization at the Golgi. Mg(2+) is required as a cofactor.

Its subcellular location is the endoplasmic reticulum membrane. The protein resides in the golgi apparatus. It is found in the trans-Golgi network. The protein localises to the golgi apparatus membrane. It localises to the early endosome membrane. Its subcellular location is the cytoplasmic vesicle membrane. The protein resides in the cleavage furrow. It is found in the cell projection. The protein localises to the neuron projection. It catalyses the reaction GTP + H2O = GDP + phosphate + H(+). With respect to regulation, regulated by guanine nucleotide exchange factors (GEFs) including ANKRD27 and RABGEF1, which promote the exchange of bound GDP for free GTP. Regulated by GTPase activating proteins (GAPs) which increase the GTP hydrolysis activity. Inhibited by GDP dissociation inhibitors (GDIs). In terms of biological role, the small GTPases Rab are key regulators of intracellular membrane trafficking, from the formation of transport vesicles to their fusion with membranes. Rabs cycle between an inactive GDP-bound form and an active GTP-bound form that is able to recruit to membranes different sets of downstream effectors directly responsible for vesicle formation, movement, tethering and fusion. RAB21 is involved in membrane trafficking control. Regulates integrin internalization and recycling, but does not influence the traffic of endosomally translocated receptors in general. As a result, may regulate cell adhesion and migration. During the mitosis of adherent cells, controls the endosomal trafficking of integrins which is required for the successful completion of cytokinesis. Involved in neurite growth. Following SBF2/MTMT13-mediated activation in response to starvation-induced autophagy, binds to and regulates SNARE protein VAMP8 endolysosomal transport required for SNARE-mediated autophagosome-lysosome fusion. Modulates protein levels of the cargo receptors TMED2 and TMED10, and required for appropriate Golgi localization of TMED10. The chain is Ras-related protein Rab-21 from Rattus norvegicus (Rat).